Reading from the N-terminus, the 499-residue chain is BTB/POZ domain-containing protein At5g60050 (499 aa).

Low complexity predominate over residues 18–30; that stretch reads PSLSFSPSRISSP. The interval 18–57 is disordered; that stretch reads PSLSFSPSRISSPIKLSTASPPLPPPPPPPPNESTLSNPT. The span at 38–49 shows a compositional bias: pro residues; the sequence is PPLPPPPPPPPN. The BTB domain occupies 99 to 172; that stretch reads GDVKLTVVGK…MYSDDLKKKL (74 aa).

Its pathway is protein modification; protein ubiquitination. May act as a substrate-specific adapter of an E3 ubiquitin-protein ligase complex (CUL3-RBX1-BTB) which mediates the ubiquitination and subsequent proteasomal degradation of target proteins. In Arabidopsis thaliana (Mouse-ear cress), this protein is BTB/POZ domain-containing protein At5g60050.